The primary structure comprises 121 residues: Putative ankyrin repeat protein L215 (121 aa).

2 ANK repeats span residues Gln10 to Glu40 and Ile42 to Val71.

In Acanthamoeba polyphaga mimivirus (APMV), this protein is Putative ankyrin repeat protein L215.